The chain runs to 117 residues: Large ribosomal subunit protein bL20 (117 aa).

It belongs to the bacterial ribosomal protein bL20 family.

Its function is as follows. Binds directly to 23S ribosomal RNA and is necessary for the in vitro assembly process of the 50S ribosomal subunit. It is not involved in the protein synthesizing functions of that subunit. The sequence is that of Large ribosomal subunit protein bL20 from Marinobacter nauticus (strain ATCC 700491 / DSM 11845 / VT8) (Marinobacter aquaeolei).